The chain runs to 167 residues: 2-C-methyl-D-erythritol 2,4-cyclodiphosphate synthase (167 aa).

Residues D15 and H17 each contribute to the a divalent metal cation site. 4-CDP-2-C-methyl-D-erythritol 2-phosphate is bound by residues 15–17 (DIH) and 43–44 (HS). H51 provides a ligand contact to a divalent metal cation. 4-CDP-2-C-methyl-D-erythritol 2-phosphate is bound by residues 65 to 67 (DIG), 141 to 144 (TTNE), and R151.

It belongs to the IspF family. Homotrimer. Requires a divalent metal cation as cofactor.

The catalysed reaction is 4-CDP-2-C-methyl-D-erythritol 2-phosphate = 2-C-methyl-D-erythritol 2,4-cyclic diphosphate + CMP. Its pathway is isoprenoid biosynthesis; isopentenyl diphosphate biosynthesis via DXP pathway; isopentenyl diphosphate from 1-deoxy-D-xylulose 5-phosphate: step 4/6. In terms of biological role, involved in the biosynthesis of isopentenyl diphosphate (IPP) and dimethylallyl diphosphate (DMAPP), two major building blocks of isoprenoid compounds. Catalyzes the conversion of 4-diphosphocytidyl-2-C-methyl-D-erythritol 2-phosphate (CDP-ME2P) to 2-C-methyl-D-erythritol 2,4-cyclodiphosphate (ME-CPP) with a corresponding release of cytidine 5-monophosphate (CMP). The protein is 2-C-methyl-D-erythritol 2,4-cyclodiphosphate synthase of Prochlorococcus marinus (strain MIT 9312).